We begin with the raw amino-acid sequence, 295 residues long: Putative xyloglucan endotransglucosylase/hydrolase protein 1 (295 aa).

An N-terminal signal peptide occupies residues 1 to 24 (MNKMEYLSIFGFVSVLYLIIRVDA). The region spanning 27 to 225 (YEVNGIDQSK…WSLAPFKANF (199 aa)) is the GH16 domain. Glu-113 acts as the Nucleophile in catalysis. Residue Glu-117 is the Proton donor of the active site. Xyloglucan is bound by residues Glu-117, 129-131 (QTN), and 139-141 (NRE). Asn-180 carries an N-linked (GlcNAc...) asparagine glycan. Xyloglucan is bound by residues 204 to 205 (NW) and Gly-209. N-linked (GlcNAc...) asparagine glycosylation is found at Asn-215 and Asn-229. Intrachain disulfides connect Cys-233/Cys-242 and Cys-278/Cys-291. Arg-283 contacts xyloglucan.

The protein belongs to the glycosyl hydrolase 16 family. XTH group 1 subfamily. Contains at least one intrachain disulfide bond essential for its enzymatic activity.

It localises to the secreted. The protein localises to the cell wall. Its subcellular location is the extracellular space. It is found in the apoplast. The catalysed reaction is breaks a beta-(1-&gt;4) bond in the backbone of a xyloglucan and transfers the xyloglucanyl segment on to O-4 of the non-reducing terminal glucose residue of an acceptor, which can be a xyloglucan or an oligosaccharide of xyloglucan.. In terms of biological role, may catalyze xyloglucan endohydrolysis (XEH) and/or endotransglycosylation (XET). Cleaves and religates xyloglucan polymers, an essential constituent of the primary cell wall, and thereby participates in cell wall construction of growing tissues. The polypeptide is Putative xyloglucan endotransglucosylase/hydrolase protein 1 (XTH1) (Arabidopsis thaliana (Mouse-ear cress)).